The following is a 274-amino-acid chain: NH(3)-dependent NAD(+) synthetase (274 aa).

46–53 (GISGGQDS) is an ATP binding site. Aspartate 52 lines the Mg(2+) pocket. Arginine 140 is a deamido-NAD(+) binding site. Threonine 160 lines the ATP pocket. Position 165 (glutamate 165) interacts with Mg(2+). 2 residues coordinate deamido-NAD(+): lysine 173 and aspartate 180. The ATP site is built by lysine 189 and threonine 211. A deamido-NAD(+)-binding site is contributed by 260 to 261 (HK).

Belongs to the NAD synthetase family. Homodimer.

The catalysed reaction is deamido-NAD(+) + NH4(+) + ATP = AMP + diphosphate + NAD(+) + H(+). Its pathway is cofactor biosynthesis; NAD(+) biosynthesis; NAD(+) from deamido-NAD(+) (ammonia route): step 1/1. Catalyzes the ATP-dependent amidation of deamido-NAD to form NAD. Uses ammonia as a nitrogen source. The protein is NH(3)-dependent NAD(+) synthetase of Streptococcus pyogenes serotype M3 (strain ATCC BAA-595 / MGAS315).